The following is a 238-amino-acid chain: CS1 fimbrial subunit B (238 aa).

Residues 1 to 17 (MRKLFLSLLMIPFVAKA) form the signal peptide.

The protein localises to the fimbrium. Its function is as follows. Might function as a shuttle protein in the transport of fimbria through the periplasmic space or might function as an adhesin. In Escherichia coli, this protein is CS1 fimbrial subunit B (csoB).